We begin with the raw amino-acid sequence, 414 residues long: MTTQRSPGLFRRLAHGSLVKQILVGLVLGILLAWISKPAAEAVGLLGTLFVGALKAVAPILVLMLVMASIANHQHGQKTNIRPILFLYLLGTFSAALAAVVFSFAFPSTLHLSSSAGDISPPSGIVEVMRGLVMSMVSNPIDALLKGNYIGILVWAIGLGFALRHGNETTKNLVNDMSNAVTFMVKLVIRFAPIGIFGLVSSTLATTGFSTLWGYAQLLVVLVGCMLLVALVVNPLLVWWKIRRNPFPLVLLCLRESGVYAFFTRSSAANIPVNMALCEKLNLDRDTYSVSIPLGATINMAGAAITITVLTLAAVNTLGIPVDLPTALLLSVVASLCACGASGVAGGSLLLIPLACNMFGISNDIAMQVVAVGFIIGVLQDSCETALNSSTDVLFTAAACQAEDDRLANSALRN.

Residues 2 to 15 (TTQRSPGLFRRLAH) are Cytoplasmic-facing. Residues 16 to 36 (GSLVKQILVGLVLGILLAWIS) form a helical membrane-spanning segment. Residues 37-45 (KPAAEAVGL) lie on the Periplasmic side of the membrane. Residues 46–66 (LGTLFVGALKAVAPILVLMLV) traverse the membrane as a helical segment. Residues 67 to 83 (MASIANHQHGQKTNIRP) are Cytoplasmic-facing. The chain crosses the membrane as a helical span at residues 84–104 (ILFLYLLGTFSAALAAVVFSF). Over 105-142 (AFPSTLHLSSSAGDISPPSGIVEVMRGLVMSMVSNPID) the chain is Periplasmic. A helical membrane pass occupies residues 143-163 (ALLKGNYIGILVWAIGLGFAL). Residues 164 to 179 (RHGNETTKNLVNDMSN) lie on the Cytoplasmic side of the membrane. Residues 180–200 (AVTFMVKLVIRFAPIGIFGLV) traverse the membrane as a helical segment. The Periplasmic segment spans residues 201–217 (SSTLATTGFSTLWGYAQ). The helical transmembrane segment at 218–238 (LLVVLVGCMLLVALVVNPLLV) threads the bilayer. At 239-299 (WWKIRRNPFP…VSIPLGATIN (61 aa)) the chain is on the cytoplasmic side. Residues 300 to 320 (MAGAAITITVLTLAAVNTLGI) traverse the membrane as a helical segment. Residues 321 to 331 (PVDLPTALLLS) are Periplasmic-facing. A helical membrane pass occupies residues 332-352 (VVASLCACGASGVAGGSLLLI). Residues 353-414 (PLACNMFGIS…DRLANSALRN (62 aa)) are Cytoplasmic-facing.

This sequence belongs to the dicarboxylate/amino acid:cation symporter (DAACS) (TC 2.A.23) family.

It localises to the cell inner membrane. It catalyses the reaction L-serine(in) + Na(+)(in) = L-serine(out) + Na(+)(out). It carries out the reaction L-threonine(in) + Na(+)(in) = L-threonine(out) + Na(+)(out). Involved in the import of serine and threonine into the cell, with the concomitant import of sodium (symport system). This Shigella flexneri serotype 5b (strain 8401) protein is Serine/threonine transporter SstT.